Here is a 329-residue protein sequence, read N- to C-terminus: Probable cell division protein WhiA (329 aa).

The segment at residues Ser-276–Arg-309 is a DNA-binding region (H-T-H motif). The segment at Ala-308 to Gly-329 is disordered. A compositionally biased stretch (polar residues) spans Arg-309–Glu-318.

This sequence belongs to the WhiA family.

In terms of biological role, involved in cell division and chromosome segregation. The protein is Probable cell division protein WhiA of Cutibacterium acnes (strain DSM 16379 / KPA171202) (Propionibacterium acnes).